The chain runs to 380 residues: Queuine tRNA-ribosyltransferase (380 aa).

The active-site Proton acceptor is the D96. Residues 96-100, D150, Q193, and G220 each bind substrate; that span reads DSGGF. The segment at 251-257 is RNA binding; the sequence is GVGAPDS. D270 (nucleophile) is an active-site residue. Residues 275-279 are RNA binding; important for wobble base 34 recognition; sequence TRIAR. 4 residues coordinate Zn(2+): C308, C310, C313, and H339.

It belongs to the queuine tRNA-ribosyltransferase family. Homodimer. Within each dimer, one monomer is responsible for RNA recognition and catalysis, while the other monomer binds to the replacement base PreQ1. It depends on Zn(2+) as a cofactor.

It catalyses the reaction 7-aminomethyl-7-carbaguanine + guanosine(34) in tRNA = 7-aminomethyl-7-carbaguanosine(34) in tRNA + guanine. It functions in the pathway tRNA modification; tRNA-queuosine biosynthesis. In terms of biological role, catalyzes the base-exchange of a guanine (G) residue with the queuine precursor 7-aminomethyl-7-deazaguanine (PreQ1) at position 34 (anticodon wobble position) in tRNAs with GU(N) anticodons (tRNA-Asp, -Asn, -His and -Tyr). Catalysis occurs through a double-displacement mechanism. The nucleophile active site attacks the C1' of nucleotide 34 to detach the guanine base from the RNA, forming a covalent enzyme-RNA intermediate. The proton acceptor active site deprotonates the incoming PreQ1, allowing a nucleophilic attack on the C1' of the ribose to form the product. After dissociation, two additional enzymatic reactions on the tRNA convert PreQ1 to queuine (Q), resulting in the hypermodified nucleoside queuosine (7-(((4,5-cis-dihydroxy-2-cyclopenten-1-yl)amino)methyl)-7-deazaguanosine). The sequence is that of Queuine tRNA-ribosyltransferase from Streptococcus suis (strain 98HAH33).